A 132-amino-acid polypeptide reads, in one-letter code: Phosphoribosyl-AMP cyclohydrolase (132 aa).

Position 89 (Asp-89) interacts with Mg(2+). Position 90 (Cys-90) interacts with Zn(2+). Asp-91 and Asp-93 together coordinate Mg(2+). Zn(2+) is bound by residues Cys-106 and Cys-113.

This sequence belongs to the PRA-CH family. In terms of assembly, homodimer. It depends on Mg(2+) as a cofactor. Zn(2+) serves as cofactor.

Its subcellular location is the cytoplasm. The enzyme catalyses 1-(5-phospho-beta-D-ribosyl)-5'-AMP + H2O = 1-(5-phospho-beta-D-ribosyl)-5-[(5-phospho-beta-D-ribosylamino)methylideneamino]imidazole-4-carboxamide. It functions in the pathway amino-acid biosynthesis; L-histidine biosynthesis; L-histidine from 5-phospho-alpha-D-ribose 1-diphosphate: step 3/9. Functionally, catalyzes the hydrolysis of the adenine ring of phosphoribosyl-AMP. The polypeptide is Phosphoribosyl-AMP cyclohydrolase (Renibacterium salmoninarum (strain ATCC 33209 / DSM 20767 / JCM 11484 / NBRC 15589 / NCIMB 2235)).